The primary structure comprises 629 residues: tRNA uridine 5-carboxymethylaminomethyl modification enzyme MnmG (629 aa).

Residues 14–19, valine 126, and serine 181 contribute to the FAD site; that span reads GAGHAG. Position 273–287 (273–287) interacts with NAD(+); the sequence is GPRYCPSIEDKVVRF. Position 370 (glutamine 370) interacts with FAD.

The protein belongs to the MnmG family. In terms of assembly, homodimer. Heterotetramer of two MnmE and two MnmG subunits. It depends on FAD as a cofactor.

The protein localises to the cytoplasm. NAD-binding protein involved in the addition of a carboxymethylaminomethyl (cmnm) group at the wobble position (U34) of certain tRNAs, forming tRNA-cmnm(5)s(2)U34. The sequence is that of tRNA uridine 5-carboxymethylaminomethyl modification enzyme MnmG from Bacillus mycoides (strain KBAB4) (Bacillus weihenstephanensis).